The sequence spans 503 residues: Lysine--tRNA ligase (503 aa).

Mg(2+) contacts are provided by glutamate 414 and glutamate 421.

The protein belongs to the class-II aminoacyl-tRNA synthetase family. In terms of assembly, homodimer. Mg(2+) serves as cofactor.

Its subcellular location is the cytoplasm. It catalyses the reaction tRNA(Lys) + L-lysine + ATP = L-lysyl-tRNA(Lys) + AMP + diphosphate. The sequence is that of Lysine--tRNA ligase from Neisseria gonorrhoeae (strain ATCC 700825 / FA 1090).